A 459-amino-acid chain; its full sequence is Ribulose bisphosphate carboxylase (459 aa).

N111 is a substrate binding site. Residue K166 is the Proton acceptor of the active site. K168 serves as a coordination point for substrate. K191, D193, and E194 together coordinate Mg(2+). K191 is modified (N6-carboxylysine). The Proton acceptor role is filled by H287. Positions 288, 321, and 368 each coordinate substrate.

Belongs to the RuBisCO large chain family. Type II subfamily. In terms of assembly, homodimer. Mg(2+) is required as a cofactor.

It carries out the reaction 2 (2R)-3-phosphoglycerate + 2 H(+) = D-ribulose 1,5-bisphosphate + CO2 + H2O. It catalyses the reaction D-ribulose 1,5-bisphosphate + O2 = 2-phosphoglycolate + (2R)-3-phosphoglycerate + 2 H(+). Its function is as follows. RuBisCO catalyzes two reactions: the carboxylation of D-ribulose 1,5-bisphosphate, the primary event in carbon dioxide fixation, as well as the oxidative fragmentation of the pentose substrate. Both reactions occur simultaneously and in competition at the same active site. This Polaromonas naphthalenivorans (strain CJ2) protein is Ribulose bisphosphate carboxylase.